The chain runs to 229 residues: MDYVSDDFAPSNILSCNDDSGDHPRNLIPELCRQFYANGWVTGTGGGISIKYNDQIFIAPSGVQKERIQPDDLFVQNLNGEDVIIPKPEKKLSKSQCTPIFMCSFTERNAGAVIHVHSQEVVKLCLLNPENEVKITGLEMIKGIYNEKKGKFYDNDEELIIPIIENSKYEKDLVDTFKIALKKYPSTSAVLVRNHGMYVWGSNWKTPKTQLEGYEYLFKIAIFKKIPPV.

A substrate-binding site is contributed by C97. H115 and H117 together coordinate Zn(2+). The Proton donor/acceptor role is filled by E139. Position 195 (H195) interacts with Zn(2+).

Belongs to the aldolase class II family. MtnB subfamily. Zn(2+) serves as cofactor.

The protein resides in the cytoplasm. The enzyme catalyses 5-(methylsulfanyl)-D-ribulose 1-phosphate = 5-methylsulfanyl-2,3-dioxopentyl phosphate + H2O. The protein operates within amino-acid biosynthesis; L-methionine biosynthesis via salvage pathway; L-methionine from S-methyl-5-thio-alpha-D-ribose 1-phosphate: step 2/6. In terms of biological role, catalyzes the dehydration of methylthioribulose-1-phosphate (MTRu-1-P) into 2,3-diketo-5-methylthiopentyl-1-phosphate (DK-MTP-1-P). This Acyrthosiphon pisum (Pea aphid) protein is Probable methylthioribulose-1-phosphate dehydratase.